Reading from the N-terminus, the 33-residue chain is Brevinin-2DYb (33 aa).

A disulfide bridge connects residues C27 and C33.

Expressed by the skin glands.

It is found in the secreted. Its function is as follows. Antimicrobial peptide. Active against the Gram-positive bacterium S.aureus (MIC=30 uM) and the Gram-negative bacterium E.coli (MIC=30 uM). In Rana dybowskii (Dybovsky's frog), this protein is Brevinin-2DYb.